The primary structure comprises 1165 residues: ATP-dependent helicase/deoxyribonuclease subunit B (1165 aa).

Positions 1-298 (MALRFILGRA…AHLEREFFRR (298 aa)) constitute a UvrD-like helicase ATP-binding domain. 8–15 (GRAGTGKT) serves as a coordination point for ATP. The region spanning 279 to 584 (PARFRANPAL…QLALIPPALD (306 aa)) is the UvrD-like helicase C-terminal domain. The [4Fe-4S] cluster site is built by cysteine 800, cysteine 1119, cysteine 1122, and cysteine 1128.

It belongs to the helicase family. AddB/RexB type 1 subfamily. As to quaternary structure, heterodimer of AddA and AddB. It depends on Mg(2+) as a cofactor. [4Fe-4S] cluster is required as a cofactor.

Its function is as follows. The heterodimer acts as both an ATP-dependent DNA helicase and an ATP-dependent, dual-direction single-stranded exonuclease. Recognizes the chi site generating a DNA molecule suitable for the initiation of homologous recombination. The AddB subunit has 5' -&gt; 3' nuclease activity but not helicase activity. This chain is ATP-dependent helicase/deoxyribonuclease subunit B, found in Desulforudis audaxviator (strain MP104C).